The chain runs to 221 residues: ATP-dependent dethiobiotin synthetase BioD (221 aa).

11-16 (GVGKTY) lines the ATP pocket. Threonine 15 provides a ligand contact to Mg(2+). Lysine 36 is an active-site residue. Residue threonine 40 coordinates substrate. Residues aspartate 48 and 107 to 110 (EGAG) each bind ATP. 2 residues coordinate Mg(2+): aspartate 48 and glutamate 107.

The protein belongs to the dethiobiotin synthetase family. In terms of assembly, homodimer. Mg(2+) is required as a cofactor.

It localises to the cytoplasm. It carries out the reaction (7R,8S)-7,8-diammoniononanoate + CO2 + ATP = (4R,5S)-dethiobiotin + ADP + phosphate + 3 H(+). It functions in the pathway cofactor biosynthesis; biotin biosynthesis; biotin from 7,8-diaminononanoate: step 1/2. Functionally, catalyzes a mechanistically unusual reaction, the ATP-dependent insertion of CO2 between the N7 and N8 nitrogen atoms of 7,8-diaminopelargonic acid (DAPA, also called 7,8-diammoniononanoate) to form a ureido ring. This chain is ATP-dependent dethiobiotin synthetase BioD, found in Hydrogenobaculum sp. (strain Y04AAS1).